A 582-amino-acid chain; its full sequence is Dihydroxy-acid dehydratase 3 (582 aa).

Cys-67 serves as a coordination point for [2Fe-2S] cluster. Asp-99 is a Mg(2+) binding site. Cys-140 contacts [2Fe-2S] cluster. Mg(2+)-binding residues include Asp-141 and Lys-142. Lys-142 is modified (N6-carboxylysine). Cys-212 contacts [2Fe-2S] cluster. Glu-462 lines the Mg(2+) pocket. The active-site Proton acceptor is Ser-488.

It belongs to the IlvD/Edd family. In terms of assembly, homodimer. [2Fe-2S] cluster serves as cofactor. Requires Mg(2+) as cofactor.

It carries out the reaction (2R)-2,3-dihydroxy-3-methylbutanoate = 3-methyl-2-oxobutanoate + H2O. The enzyme catalyses (2R,3R)-2,3-dihydroxy-3-methylpentanoate = (S)-3-methyl-2-oxopentanoate + H2O. The protein operates within amino-acid biosynthesis; L-isoleucine biosynthesis; L-isoleucine from 2-oxobutanoate: step 3/4. It functions in the pathway amino-acid biosynthesis; L-valine biosynthesis; L-valine from pyruvate: step 3/4. In terms of biological role, functions in the biosynthesis of branched-chain amino acids. Catalyzes the dehydration of (2R,3R)-2,3-dihydroxy-3-methylpentanoate (2,3-dihydroxy-3-methylvalerate) into 2-oxo-3-methylpentanoate (2-oxo-3-methylvalerate) and of (2R)-2,3-dihydroxy-3-methylbutanoate (2,3-dihydroxyisovalerate) into 2-oxo-3-methylbutanoate (2-oxoisovalerate), the penultimate precursor to L-isoleucine and L-valine, respectively. The chain is Dihydroxy-acid dehydratase 3 from Bradyrhizobium diazoefficiens (strain JCM 10833 / BCRC 13528 / IAM 13628 / NBRC 14792 / USDA 110).